A 271-amino-acid chain; its full sequence is uncharacterized protein (271 aa).

A run of 3 helical transmembrane segments spans residues 11–33, 172–194, and 214–236; these read GWLA…LAPW, SINT…LQLI, and FLSY…GYFA. A disordered region spans residues 245–271; it reads REKAGSPPPDKPMTVEQKLADRYGRRR. Over residues 262–271 the composition is skewed to basic and acidic residues; sequence KLADRYGRRR.

Belongs to the SURF1 family.

Its subcellular location is the cell membrane. This is an uncharacterized protein from Mycobacterium tuberculosis (strain CDC 1551 / Oshkosh).